The primary structure comprises 102 residues: ATP-dependent Clp protease adapter protein ClpS (102 aa).

It belongs to the ClpS family. Binds to the N-terminal domain of the chaperone ClpA.

In terms of biological role, involved in the modulation of the specificity of the ClpAP-mediated ATP-dependent protein degradation. This is ATP-dependent Clp protease adapter protein ClpS from Janthinobacterium sp. (strain Marseille) (Minibacterium massiliensis).